A 343-amino-acid chain; its full sequence is GTPase Obg (343 aa).

The region spanning 1 to 159 is the Obg domain; it reads MKFLDQAKIY…RWVWLRLKLI (159 aa). In terms of domain architecture, OBG-type G spans 160-328; it reads ADAGLVGLPN…LLRQVMTYVA (169 aa). Residues 166-173, 191-195, 213-216, 280-283, and 309-311 each bind GTP; these read GLPNAGKS, FTTLH, DIPG, NKCD, and SGV. Ser173 and Thr193 together coordinate Mg(2+).

Belongs to the TRAFAC class OBG-HflX-like GTPase superfamily. OBG GTPase family. Monomer. Mg(2+) is required as a cofactor.

The protein localises to the cytoplasm. An essential GTPase which binds GTP, GDP and possibly (p)ppGpp with moderate affinity, with high nucleotide exchange rates and a fairly low GTP hydrolysis rate. Plays a role in control of the cell cycle, stress response, ribosome biogenesis and in those bacteria that undergo differentiation, in morphogenesis control. The sequence is that of GTPase Obg from Granulibacter bethesdensis (strain ATCC BAA-1260 / CGDNIH1).